A 348-amino-acid chain; its full sequence is UDP-glucose 4-epimerase (348 aa).

NAD(+)-binding positions include 12–14 (GYI), 33–37 (DNFHN), 66–67 (DI), phenylalanine 88, and lysine 92. Position 132 to 134 (132 to 134 (SAT)) interacts with substrate. Tyrosine 157 acts as the Proton acceptor in catalysis. NAD(+) contacts are provided by lysine 161 and tyrosine 185. Substrate-binding positions include 185–187 (YFN), 206–208 (NNL), 224–226 (NVF), arginine 239, and 300–303 (REGD).

This sequence belongs to the NAD(P)-dependent epimerase/dehydratase family. As to quaternary structure, homodimer. NAD(+) is required as a cofactor.

The catalysed reaction is UDP-alpha-D-glucose = UDP-alpha-D-galactose. It carries out the reaction UDP-N-acetyl-alpha-D-glucosamine = UDP-N-acetyl-alpha-D-galactosamine. Its pathway is carbohydrate metabolism; galactose metabolism. Functionally, catalyzes two distinct but analogous reactions: the reversible epimerization of UDP-glucose to UDP-galactose and the reversible epimerization of UDP-N-acetylglucosamine to UDP-N-acetylgalactosamine. The reaction with UDP-Gal plays a critical role in the Leloir pathway of galactose catabolism in which galactose is converted to the glycolytic intermediate glucose 6-phosphate. It contributes to the catabolism of dietary galactose and enables the endogenous biosynthesis of both UDP-Gal and UDP-GalNAc when exogenous sources are limited. Both UDP-sugar interconversions are important in the synthesis of glycoproteins and glycolipids. This Bos taurus (Bovine) protein is UDP-glucose 4-epimerase.